We begin with the raw amino-acid sequence, 88 residues long: Phosphocarrier protein HPr (88 aa).

In terms of domain architecture, HPr spans 1–88 (MEKKEFHIVA…ETLQKEGLAE (88 aa)). Catalysis depends on histidine 15, which acts as the Pros-phosphohistidine intermediate. Phosphoserine; by HPrK/P is present on serine 46.

It belongs to the HPr family. Monomer.

The protein localises to the cytoplasm. Its activity is regulated as follows. Phosphorylation on Ser-46 inhibits the phosphoryl transfer from enzyme I to HPr. General (non sugar-specific) component of the phosphoenolpyruvate-dependent sugar phosphotransferase system (sugar PTS). This major carbohydrate active-transport system catalyzes the phosphorylation of incoming sugar substrates concomitantly with their translocation across the cell membrane. The phosphoryl group from phosphoenolpyruvate (PEP) is transferred to the phosphoryl carrier protein HPr by enzyme I. Phospho-HPr then transfers it to the PTS EIIA domain. Its function is as follows. P-Ser-HPr interacts with the catabolite control protein A (CcpA), forming a complex that binds to DNA at the catabolite response elements cre, operator sites preceding a large number of catabolite-regulated genes. Thus, P-Ser-HPr is a corepressor in carbon catabolite repression (CCR), a mechanism that allows bacteria to coordinate and optimize the utilization of available carbon sources. P-Ser-HPr also plays a role in inducer exclusion, in which it probably interacts with several non-PTS permeases and inhibits their transport activity. The chain is Phosphocarrier protein HPr (ptsH) from Enterococcus faecalis (strain ATCC 700802 / V583).